The chain runs to 251 residues: E3 ubiquitin-protein ligase MARCHF3 (251 aa).

An RING-CH-type zinc finger spans residues 61-121; that stretch reads QSFNDRPMCR…ELCHFRFSVE (61 aa). Zn(2+) contacts are provided by Cys-69, Cys-72, Cys-85, Cys-87, His-95, Cys-98, Cys-111, and Cys-114. A run of 2 helical transmembrane segments spans residues 143–163 and 180–200; these read LFGD…SGWL and AVGL…WTLV.

The protein localises to the cytoplasmic vesicle membrane. Its subcellular location is the early endosome membrane. It catalyses the reaction S-ubiquitinyl-[E2 ubiquitin-conjugating enzyme]-L-cysteine + [acceptor protein]-L-lysine = [E2 ubiquitin-conjugating enzyme]-L-cysteine + N(6)-ubiquitinyl-[acceptor protein]-L-lysine.. Its pathway is protein modification; protein ubiquitination. E3 ubiquitin-protein ligase which may be involved in endosomal trafficking. E3 ubiquitin ligases accept ubiquitin from an E2 ubiquitin-conjugating enzyme in the form of a thioester and then directly transfer the ubiquitin to targeted substrates. The polypeptide is E3 ubiquitin-protein ligase MARCHF3 (marchf3) (Xenopus tropicalis (Western clawed frog)).